The sequence spans 213 residues: Serine protease inhibitor 5 (213 aa).

The N-terminal stretch at 1 to 22 (MKCLFLLCLCLVPIVVFSSTFT) is a signal peptide. Positions 23-28 (SQNPIN) are excised as a propeptide. Residues 25-30 (NPINLP) carry the Vacuolar targeting signal motif. 2 disulfides stabilise this stretch: cysteine 76–cysteine 125 and cysteine 174–cysteine 183.

This sequence belongs to the protease inhibitor I3 (leguminous Kunitz-type inhibitor) family.

The protein localises to the vacuole. Its function is as follows. Inhibitor of trypsin (serine protease). Protects the plant by inhibiting proteases of invading organisms. The sequence is that of Serine protease inhibitor 5 from Solanum tuberosum (Potato).